Here is a 186-residue protein sequence, read N- to C-terminus: Ribosome-recycling factor (186 aa).

The protein belongs to the RRF family.

The protein localises to the cytoplasm. Its function is as follows. Responsible for the release of ribosomes from messenger RNA at the termination of protein biosynthesis. May increase the efficiency of translation by recycling ribosomes from one round of translation to another. The polypeptide is Ribosome-recycling factor (Polaromonas naphthalenivorans (strain CJ2)).